The chain runs to 430 residues: Enolase (430 aa).

Position 164 (Gln-164) interacts with (2R)-2-phosphoglycerate. The Proton donor role is filled by Glu-206. 3 residues coordinate Mg(2+): Asp-243, Glu-286, and Asp-313. Positions 338, 367, 368, and 389 each coordinate (2R)-2-phosphoglycerate. Lys-338 acts as the Proton acceptor in catalysis.

This sequence belongs to the enolase family. In terms of assembly, component of the RNA degradosome, a multiprotein complex involved in RNA processing and mRNA degradation. Requires Mg(2+) as cofactor.

It localises to the cytoplasm. It is found in the secreted. Its subcellular location is the cell surface. It catalyses the reaction (2R)-2-phosphoglycerate = phosphoenolpyruvate + H2O. Its pathway is carbohydrate degradation; glycolysis; pyruvate from D-glyceraldehyde 3-phosphate: step 4/5. Its function is as follows. Catalyzes the reversible conversion of 2-phosphoglycerate (2-PG) into phosphoenolpyruvate (PEP). It is essential for the degradation of carbohydrates via glycolysis. The sequence is that of Enolase from Dichelobacter nodosus (strain VCS1703A).